Reading from the N-terminus, the 279-residue chain is MDVITDISPLRTRLVGESSIAFVPTMGGLHEGHLSLIRAARQHRECVIASIFVNRLQFAPTEDFDRYPRTLEQDCALLEEQGVHIVFAPEEKTLYPVPQEFMVEPSPIANMLEGKYRPGFFRGVATVVLKLFNIVQPQTAVFGKKDYQQLHIVRELARQFNLPIEIVAGETVRASDNLALSSRNRYLREEERAEAIRLYQVLSQVKREIEGGNRNFAGLEENAMKILATHGWNTDYVSIRERDTLAPAQPRDGNMVVLGAARLGETRLIDNLEITPKKE.

Residue 26–33 (MGGLHEGH) participates in ATP binding. Catalysis depends on H33, which acts as the Proton donor. Position 57 (Q57) interacts with (R)-pantoate. Q57 contributes to the beta-alanine binding site. 143–146 (GKKD) contacts ATP. Residue Q149 participates in (R)-pantoate binding. Residues V172 and 180–183 (LSSR) each bind ATP.

This sequence belongs to the pantothenate synthetase family. Homodimer.

The protein localises to the cytoplasm. The enzyme catalyses (R)-pantoate + beta-alanine + ATP = (R)-pantothenate + AMP + diphosphate + H(+). The protein operates within cofactor biosynthesis; (R)-pantothenate biosynthesis; (R)-pantothenate from (R)-pantoate and beta-alanine: step 1/1. Catalyzes the condensation of pantoate with beta-alanine in an ATP-dependent reaction via a pantoyl-adenylate intermediate. The polypeptide is Pantothenate synthetase (Nitrosospira multiformis (strain ATCC 25196 / NCIMB 11849 / C 71)).